A 340-amino-acid chain; its full sequence is Biotin synthase (340 aa).

One can recognise a Radical SAM core domain in the interval 47–269 (SELQLSQLLS…VAVARIVCPK (223 aa)). [4Fe-4S] cluster-binding residues include cysteine 62, cysteine 66, and cysteine 69. Residues cysteine 106, cysteine 137, cysteine 197, and arginine 273 each contribute to the [2Fe-2S] cluster site.

This sequence belongs to the radical SAM superfamily. Biotin synthase family. As to quaternary structure, homodimer. [4Fe-4S] cluster is required as a cofactor. The cofactor is [2Fe-2S] cluster.

It catalyses the reaction (4R,5S)-dethiobiotin + (sulfur carrier)-SH + 2 reduced [2Fe-2S]-[ferredoxin] + 2 S-adenosyl-L-methionine = (sulfur carrier)-H + biotin + 2 5'-deoxyadenosine + 2 L-methionine + 2 oxidized [2Fe-2S]-[ferredoxin]. Its pathway is cofactor biosynthesis; biotin biosynthesis; biotin from 7,8-diaminononanoate: step 2/2. Its function is as follows. Catalyzes the conversion of dethiobiotin (DTB) to biotin by the insertion of a sulfur atom into dethiobiotin via a radical-based mechanism. This chain is Biotin synthase, found in Caulobacter sp. (strain K31).